We begin with the raw amino-acid sequence, 380 residues long: tRNA-specific 2-thiouridylase MnmA (380 aa).

ATP is bound by residues 12–19 and methionine 38; that span reads GLSGGVDS. The interval 108–110 is interaction with target base in tRNA; it reads NPD. Cysteine 113 serves as the catalytic Nucleophile. A disulfide bridge links cysteine 113 with cysteine 210. Glycine 138 is a binding site for ATP. An interaction with tRNA region spans residues 160 to 162; sequence KDQ. Cysteine 210 functions as the Cysteine persulfide intermediate in the catalytic mechanism.

It belongs to the MnmA/TRMU family.

The protein localises to the cytoplasm. The enzyme catalyses S-sulfanyl-L-cysteinyl-[protein] + uridine(34) in tRNA + AH2 + ATP = 2-thiouridine(34) in tRNA + L-cysteinyl-[protein] + A + AMP + diphosphate + H(+). Functionally, catalyzes the 2-thiolation of uridine at the wobble position (U34) of tRNA, leading to the formation of s(2)U34. This is tRNA-specific 2-thiouridylase MnmA from Ureaplasma urealyticum serovar 10 (strain ATCC 33699 / Western).